Reading from the N-terminus, the 166-residue chain is Replication restart protein DnaT (166 aa).

This sequence belongs to the DnaT family. Homooligomerizes. Interacts with PriB. Component of the replication restart primosome. Primosome assembly occurs via a 'hand-off' mechanism. PriA binds to replication forks, subsequently PriB then DnaT bind; DnaT then displaces ssDNA to generate the helicase loading substrate.

In terms of biological role, involved in the restart of stalled replication forks, which reloads the replicative helicase on sites other than the origin of replication. Can function in multiple replication restart pathways. Displaces ssDNA from a PriB-ssDNA complex. Probably forms a spiral filament on ssDNA. The chain is Replication restart protein DnaT from Buchnera aphidicola subsp. Schizaphis graminum (strain Sg).